Here is a 423-residue protein sequence, read N- to C-terminus: Adenylosuccinate synthetase (423 aa).

Residues 11–17 (GDEGKGK) and 39–41 (GHT) contribute to the GTP site. The active-site Proton acceptor is the aspartate 12. Mg(2+) contacts are provided by aspartate 12 and glycine 39. IMP is bound by residues 12-15 (DEGK), 37-40 (NAGH), threonine 129, arginine 143, asparagine 219, threonine 234, and arginine 298. The Proton donor role is filled by histidine 40. Residue 294 to 300 (VTTGRRR) participates in substrate binding. GTP is bound by residues arginine 300, 326 to 328 (KLD), and 411 to 413 (GTG).

This sequence belongs to the adenylosuccinate synthetase family. As to quaternary structure, homodimer. Requires Mg(2+) as cofactor.

The protein localises to the cytoplasm. The catalysed reaction is IMP + L-aspartate + GTP = N(6)-(1,2-dicarboxyethyl)-AMP + GDP + phosphate + 2 H(+). Its pathway is purine metabolism; AMP biosynthesis via de novo pathway; AMP from IMP: step 1/2. Plays an important role in the de novo pathway and in the salvage pathway of purine nucleotide biosynthesis. Catalyzes the first committed step in the biosynthesis of AMP from IMP. The sequence is that of Adenylosuccinate synthetase from Penicillium rubens (strain ATCC 28089 / DSM 1075 / NRRL 1951 / Wisconsin 54-1255) (Penicillium chrysogenum).